We begin with the raw amino-acid sequence, 126 residues long: Small ribosomal subunit protein uS12 (126 aa).

A 3-methylthioaspartic acid modification is found at aspartate 89. The interval 99–126 is disordered; that stretch reads RGSLDTSGVNDRKQGRSKYGTKKPKDKK. The segment covering 113–126 has biased composition (basic residues); the sequence is GRSKYGTKKPKDKK.

The protein belongs to the universal ribosomal protein uS12 family. In terms of assembly, part of the 30S ribosomal subunit. Contacts proteins S8 and S17. May interact with IF1 in the 30S initiation complex.

Functionally, with S4 and S5 plays an important role in translational accuracy. In terms of biological role, interacts with and stabilizes bases of the 16S rRNA that are involved in tRNA selection in the A site and with the mRNA backbone. Located at the interface of the 30S and 50S subunits, it traverses the body of the 30S subunit contacting proteins on the other side and probably holding the rRNA structure together. The combined cluster of proteins S8, S12 and S17 appears to hold together the shoulder and platform of the 30S subunit. This Legionella pneumophila (strain Paris) protein is Small ribosomal subunit protein uS12.